A 239-amino-acid chain; its full sequence is Peptidyl-tRNA hydrolase (239 aa).

Y14 is a binding site for tRNA. The Proton acceptor role is filled by H19. Positions 64, 66, and 112 each coordinate tRNA. Positions 188–239 (APPRSSTSKPKAQDNREDAAQAAEERSETRTPPEARPEDTRSALQKLADKFR) are disordered. The span at 198–239 (KAQDNREDAAQAAEERSETRTPPEARPEDTRSALQKLADKFR) shows a compositional bias: basic and acidic residues.

It belongs to the PTH family. In terms of assembly, monomer.

It is found in the cytoplasm. It catalyses the reaction an N-acyl-L-alpha-aminoacyl-tRNA + H2O = an N-acyl-L-amino acid + a tRNA + H(+). Its function is as follows. Hydrolyzes ribosome-free peptidyl-tRNAs (with 1 or more amino acids incorporated), which drop off the ribosome during protein synthesis, or as a result of ribosome stalling. In terms of biological role, catalyzes the release of premature peptidyl moieties from peptidyl-tRNA molecules trapped in stalled 50S ribosomal subunits, and thus maintains levels of free tRNAs and 50S ribosomes. This Jannaschia sp. (strain CCS1) protein is Peptidyl-tRNA hydrolase.